A 121-amino-acid chain; its full sequence is Large ribosomal subunit protein bL12 (121 aa).

Belongs to the bacterial ribosomal protein bL12 family. As to quaternary structure, homodimer. Part of the ribosomal stalk of the 50S ribosomal subunit. Forms a multimeric L10(L12)X complex, where L10 forms an elongated spine to which 2 to 4 L12 dimers bind in a sequential fashion. Binds GTP-bound translation factors.

Forms part of the ribosomal stalk which helps the ribosome interact with GTP-bound translation factors. Is thus essential for accurate translation. This Leuconostoc mesenteroides subsp. mesenteroides (strain ATCC 8293 / DSM 20343 / BCRC 11652 / CCM 1803 / JCM 6124 / NCDO 523 / NBRC 100496 / NCIMB 8023 / NCTC 12954 / NRRL B-1118 / 37Y) protein is Large ribosomal subunit protein bL12.